Consider the following 200-residue polypeptide: Thymidine kinase (200 aa).

ATP-binding positions include 15–22 (GSMFSGKS) and 88–91 (DEVQ). E89 (proton acceptor) is an active-site residue. Zn(2+) contacts are provided by C145, C148, C183, and H186.

It belongs to the thymidine kinase family. Homotetramer.

The protein resides in the cytoplasm. It carries out the reaction thymidine + ATP = dTMP + ADP + H(+). The protein is Thymidine kinase of Bacillus pumilus (strain SAFR-032).